Consider the following 356-residue polypeptide: DNA polymerase IV (356 aa).

The UmuC domain maps to 7–187 (IIHVDMDAFY…LPVNRVPGVG (181 aa)). Mg(2+)-binding residues include Asp11 and Asp105. Residue Glu106 is part of the active site.

This sequence belongs to the DNA polymerase type-Y family. As to quaternary structure, monomer. Mg(2+) is required as a cofactor.

Its subcellular location is the cytoplasm. It carries out the reaction DNA(n) + a 2'-deoxyribonucleoside 5'-triphosphate = DNA(n+1) + diphosphate. Functionally, poorly processive, error-prone DNA polymerase involved in untargeted mutagenesis. Copies undamaged DNA at stalled replication forks, which arise in vivo from mismatched or misaligned primer ends. These misaligned primers can be extended by PolIV. Exhibits no 3'-5' exonuclease (proofreading) activity. May be involved in translesional synthesis, in conjunction with the beta clamp from PolIII. The protein is DNA polymerase IV of Stenotrophomonas maltophilia (strain R551-3).